The chain runs to 642 residues: Threonine--tRNA ligase (642 aa).

Residues 1–61 (MPVITLPDGS…ETDAELSIIT (61 aa)) form the TGS domain. Positions 243 to 534 (DHRKIGKQLD…LIEEYAGRFP (292 aa)) are catalytic. Zn(2+) contacts are provided by cysteine 334, histidine 385, and histidine 511.

The protein belongs to the class-II aminoacyl-tRNA synthetase family. As to quaternary structure, homodimer. It depends on Zn(2+) as a cofactor.

The protein resides in the cytoplasm. It carries out the reaction tRNA(Thr) + L-threonine + ATP = L-threonyl-tRNA(Thr) + AMP + diphosphate + H(+). Functionally, catalyzes the attachment of threonine to tRNA(Thr) in a two-step reaction: L-threonine is first activated by ATP to form Thr-AMP and then transferred to the acceptor end of tRNA(Thr). Also edits incorrectly charged L-seryl-tRNA(Thr). The chain is Threonine--tRNA ligase from Shewanella oneidensis (strain ATCC 700550 / JCM 31522 / CIP 106686 / LMG 19005 / NCIMB 14063 / MR-1).